Consider the following 126-residue polypeptide: Histone H2B type 2-E (126 aa).

Residues 1 to 12 are compositionally biased toward low complexity; it reads MPEPAKSAPAPK. Residues 1–32 are disordered; the sequence is MPEPAKSAPAPKKGSKKAVTKAQKKDGKKRKR. Pro-2 is subject to N-acetylproline. An ADP-ribosyl glutamic acid modification is found at Glu-3. Residue Lys-6 is modified to N6-(2-hydroxyisobutyryl)lysine; alternate. Lys-6 carries the N6-(beta-hydroxybutyryl)lysine; alternate modification. The residue at position 6 (Lys-6) is an N6-acetyllysine; alternate. At Lys-6 the chain carries N6-butyryllysine; alternate. An N6-crotonyllysine; alternate modification is found at Lys-6. Position 6 is an N6-lactoyllysine; alternate (Lys-6). Lys-6 participates in a covalent cross-link: Glycyl lysine isopeptide (Lys-Gly) (interchain with G-Cter in SUMO2); alternate. Residue Ser-7 is modified to ADP-ribosylserine. N6-(beta-hydroxybutyryl)lysine; alternate is present on Lys-12. Lys-12 and Lys-13 each carry N6-acetyllysine; alternate. Lys-12 and Lys-13 each carry N6-crotonyllysine; alternate. Position 12 is an N6-lactoyllysine; alternate (Lys-12). Position 13 is an N6-(2-hydroxyisobutyryl)lysine; alternate (Lys-13). Ser-15 carries the phosphoserine; by STK4/MST1 modification. An N6-acetyllysine; alternate mark is found at Lys-16, Lys-17, Lys-21, and Lys-24. N6-crotonyllysine; alternate is present on residues Lys-16, Lys-17, Lys-21, and Lys-24. An N6-lactoyllysine; alternate mark is found at Lys-16, Lys-17, Lys-21, and Lys-24. Lys-17 carries the N6-glutaryllysine; alternate modification. An N6-(2-hydroxyisobutyryl)lysine; alternate mark is found at Lys-21 and Lys-24. Lys-21 carries the post-translational modification N6-(beta-hydroxybutyryl)lysine; alternate. Position 21 is an N6-butyryllysine; alternate (Lys-21). Lys-21 is covalently cross-linked (Glycyl lysine isopeptide (Lys-Gly) (interchain with G-Cter in SUMO2); alternate). Lys-25 carries the post-translational modification N6-(2-hydroxyisobutyryl)lysine. Position 35 is an N6-(2-hydroxyisobutyryl)lysine; alternate (Lys-35). Lys-35 is modified (N6-(beta-hydroxybutyryl)lysine; alternate). Position 35 is an N6-crotonyllysine; alternate (Lys-35). At Lys-35 the chain carries N6-glutaryllysine; alternate. Position 35 is an N6-succinyllysine; alternate (Lys-35). Lys-35 is covalently cross-linked (Glycyl lysine isopeptide (Lys-Gly) (interchain with G-Cter in ubiquitin); alternate). Glu-36 carries the polyADP-ribosyl glutamic acid modification. Position 37 is a phosphoserine; by AMPK (Ser-37). 3 positions are modified to N6-(2-hydroxyisobutyryl)lysine; alternate: Lys-44, Lys-47, and Lys-58. Residue Lys-44 is modified to N6-lactoyllysine; alternate. Lys-44 and Lys-47 each carry N6-glutaryllysine; alternate. Lys-47 carries the post-translational modification N6-methyllysine; alternate. Lys-58 is modified (N6,N6-dimethyllysine; alternate). Dimethylated arginine is present on Arg-80. The residue at position 86 (Lys-86) is an N6-(2-hydroxyisobutyryl)lysine; alternate. An N6-acetyllysine; alternate modification is found at Lys-86. Residue Lys-86 is modified to N6-lactoyllysine; alternate. Lys-86 carries the N6,N6,N6-trimethyllysine; alternate modification. Arg-87 and Arg-93 each carry omega-N-methylarginine. Lys-109 carries the N6-(2-hydroxyisobutyryl)lysine; alternate modification. Lys-109 carries the post-translational modification N6-lactoyllysine; alternate. An N6-glutaryllysine; alternate modification is found at Lys-109. Lys-109 bears the N6-methyllysine; alternate mark. Ser-113 carries O-linked (GlcNAc) serine glycosylation. Phosphothreonine is present on Thr-116. 2 positions are modified to N6-(2-hydroxyisobutyryl)lysine; alternate: Lys-117 and Lys-121. An N6-(beta-hydroxybutyryl)lysine; alternate modification is found at Lys-117. N6-lactoyllysine; alternate occurs at positions 117 and 121. Lys-117 and Lys-121 each carry N6-glutaryllysine; alternate. 2 positions are modified to N6-succinyllysine; alternate: Lys-117 and Lys-121. Lys-117 is modified (N6-methylated lysine; alternate). Residue Lys-121 forms a Glycyl lysine isopeptide (Lys-Gly) (interchain with G-Cter in ubiquitin); alternate linkage.

This sequence belongs to the histone H2B family. In terms of assembly, the nucleosome is a histone octamer containing two molecules each of H2A, H2B, H3 and H4 assembled in one H3-H4 heterotetramer and two H2A-H2B heterodimers. The octamer wraps approximately 147 bp of DNA. Post-translationally, monoubiquitination at Lys-35 (H2BK34Ub) by the MSL1/MSL2 dimer is required for histone H3 'Lys-4' (H3K4me) and 'Lys-79' (H3K79me) methylation and transcription activation at specific gene loci, such as HOXA9 and MEIS1 loci. Similarly, monoubiquitination at Lys-121 (H2BK120Ub) by the RNF20/40 complex gives a specific tag for epigenetic transcriptional activation and is also prerequisite for histone H3 'Lys-4' and 'Lys-79' methylation. It also functions cooperatively with the FACT dimer to stimulate elongation by RNA polymerase II. H2BK120Ub also acts as a regulator of mRNA splicing: deubiquitination by USP49 is required for efficient cotranscriptional splicing of a large set of exons. Phosphorylated on Ser-15 (H2BS14ph) by STK4/MST1 during apoptosis; which facilitates apoptotic chromatin condensation. Also phosphorylated on Ser-15 in response to DNA double strand breaks (DSBs), and in correlation with somatic hypermutation and immunoglobulin class-switch recombination. Phosphorylation at Ser-37 (H2BS36ph) by AMPK in response to stress promotes transcription. In terms of processing, ADP-ribosylated by PARP1 or PARP2 on Ser-7 (H2BS6ADPr) in response to DNA damage. H2BS6ADPr promotes recruitment of CHD1L. Mono-ADP-ribosylated on Glu-3 (H2BE2ADPr) by PARP3 in response to single-strand breaks. Poly ADP-ribosylation on Glu-36 (H2BE35ADPr) by PARP1 regulates adipogenesis: it inhibits phosphorylation at Ser-37 (H2BS36ph), thereby blocking expression of pro-adipogenetic genes. Post-translationally, crotonylation (Kcr) is specifically present in male germ cells and marks testis-specific genes in post-meiotic cells, including X-linked genes that escape sex chromosome inactivation in haploid cells. Crotonylation marks active promoters and enhancers and confers resistance to transcriptional repressors. It is also associated with post-meiotically activated genes on autosomes. GlcNAcylation at Ser-113 promotes monoubiquitination of Lys-121. It fluctuates in response to extracellular glucose, and associates with transcribed genes. In terms of processing, lactylated in macrophages by EP300/P300 by using lactoyl-CoA directly derived from endogenous or exogenous lactate, leading to stimulates gene transcription.

Its subcellular location is the nucleus. The protein localises to the chromosome. Its function is as follows. Core component of nucleosome. Nucleosomes wrap and compact DNA into chromatin, limiting DNA accessibility to the cellular machineries which require DNA as a template. Histones thereby play a central role in transcription regulation, DNA repair, DNA replication and chromosomal stability. DNA accessibility is regulated via a complex set of post-translational modifications of histones, also called histone code, and nucleosome remodeling. Has broad antibacterial activity. May contribute to the formation of the functional antimicrobial barrier of the colonic epithelium, and to the bactericidal activity of amniotic fluid. This Pongo abelii (Sumatran orangutan) protein is Histone H2B type 2-E.